Reading from the N-terminus, the 329-residue chain is tRNA dimethylallyltransferase (329 aa).

Residue Gly-12–Thr-19 coordinates ATP. Thr-14–Thr-19 is a binding site for substrate. The tract at residues Asp-37–Tyr-40 is interaction with substrate tRNA. A disordered region spans residues Leu-306–Ala-329. The segment covering Ser-320 to Ala-329 has biased composition (gly residues).

It belongs to the IPP transferase family. Monomer. Mg(2+) is required as a cofactor.

It catalyses the reaction adenosine(37) in tRNA + dimethylallyl diphosphate = N(6)-dimethylallyladenosine(37) in tRNA + diphosphate. Functionally, catalyzes the transfer of a dimethylallyl group onto the adenine at position 37 in tRNAs that read codons beginning with uridine, leading to the formation of N6-(dimethylallyl)adenosine (i(6)A). This is tRNA dimethylallyltransferase from Thermomicrobium roseum (strain ATCC 27502 / DSM 5159 / P-2).